Here is a 641-residue protein sequence, read N- to C-terminus: Serine/threonine-protein kinase pink-1, mitochondrial (641 aa).

The transit peptide at 1–74 directs the protein to the mitochondrion; sequence MSMKRFGKAA…TRHGRVFRPF (74 aa). In terms of domain architecture, Protein kinase spans 137–483; it reads YEFGEFLGQG…AANALNLSLF (347 aa). ATP-binding positions include 143–151 and K199; that span reads LGQGCNAAV. D338 acts as the Proton acceptor in catalysis.

The protein belongs to the protein kinase superfamily. Ser/Thr protein kinase family. It depends on Mg(2+) as a cofactor. In terms of processing, autophosphorylated.

The protein resides in the mitochondrion. The catalysed reaction is L-seryl-[protein] + ATP = O-phospho-L-seryl-[protein] + ADP + H(+). The enzyme catalyses L-threonyl-[protein] + ATP = O-phospho-L-threonyl-[protein] + ADP + H(+). Protects against mitochondrial dysfunction during cellular stress, potentially by phosphorylating mitochondrial proteins. Plays a role in mitophagy. The polypeptide is Serine/threonine-protein kinase pink-1, mitochondrial (pink-1) (Caenorhabditis elegans).